Consider the following 430-residue polypeptide: MMPSESETESRDRAAAQVGTAAAAAVAKAAPAGGGPDPEASSASLGQHLSGLSWPQVKRLDALLSEPIPIHGRGNFPTLSVQPRQIVQVVRSSLEEQGLRVHGVRLHGSAASHVLHPESGLGYKDLDLVFRVDLRSEASFQLTKEVVLACLLDFLPAGVSRAKITPLTLKEAYVQKLVKVCTDTDRWSLISLSNKSGKNVELKFVDSVRRQFEFSVDSFQILLDSLLLFSQCSPTPMSEAFHPSVTGESLYGDFAEALDHLRHRVIATRSPEEIRGGGLLKYCHLLVRGFRPRPSTDVGALQRYMCSRFFIDFPDLVEQRRTLERYLEAHFSGADAARRYACLVTLHRVVNESTVCLMNHERRQTLDLITALALQALAEQGPAAAAALAWRCPAIPDGLVPATTVSYYVTPVQPLLARAHASYPTWLPCN.

Positions 1-46 (MMPSESETESRDRAAAQVGTAAAAAVAKAAPAGGGPDPEASSASLG) are disordered. Residues 15–44 (AAQVGTAAAAAVAKAAPAGGGPDPEASSAS) show a composition bias toward low complexity.

This sequence belongs to the TENT family.

It is found in the cytoplasm. The protein resides in the nucleus. It catalyses the reaction RNA(n) + ATP = RNA(n)-3'-adenine ribonucleotide + diphosphate. Its function is as follows. Catalyzes the transfer of one adenosine molecule from an ATP to an mRNA poly(A) tail bearing a 3'-OH terminal group in an ATP hydrolysis-dependent manner. May be involved in maintaining the translation efficiency of at least some genes through preventing degradation of their mRNAs. Prefers RNA molecules that are adenosine-rich close to 3'-end. In addition, may inhibit cell proliferation and cell cycle progression through ubiquitination of beta-catenin/CTNNB1. In Bos taurus (Bovine), this protein is Terminal nucleotidyltransferase 5B.